A 268-amino-acid polypeptide reads, in one-letter code: AN1-type zinc finger protein 1 (268 aa).

A2 carries the N-acetylalanine modification. 2 AN1-type zinc fingers span residues 4 to 52 (LDIG…VINE) and 58 to 106 (QHTS…IPKP). The Zn(2+) site is built by C10, C15, C25, C28, C33, H36, H42, C44, C64, C69, C79, C82, C87, H90, H96, and C98. Residues 160-260 (QTERIYFQVF…EYLNDEEQFC (101 aa)) are ubiquitin-like.

As to quaternary structure, associates with the 26S proteasome; this association occurs upon exposure to arsenite and is reduced in the presence of ATP. Interacts (via AN1-type 1 and 2 zinc fingers) with PSMD1; this interaction is increased upon arsenite treatment and occurs in an ATP-independent manner. Interacts with PSMC4. Interacts with PSMA1. Interacts (via its ubiquitin-like region) with VCP; this interaction occurs in an arsenite-dependent manner and is necessary for the recruitment of the ubiquitin-selective ATPase VCP to stress granules (SGs).

Its subcellular location is the cytoplasm. The protein localises to the stress granule. In terms of biological role, plays a role in the regulation of cytoplasmic stress granules (SGs) turnover. SGs are dynamic and transient cytoplasmic ribonucleoprotein assemblies important for cellular protein homeostasis when protein production is suspended after acute exogenous stress. Associates with SGs and is involved in the efficient and specific arsenite-induced clearance process of SGs through the recruitment of the ubiquitin-selective ATPase VCP and the 26S proteasome. This process requires both complexes for efficient degradation of damaged ubiquitinated SG proteins during recovery from arsenite stress, and hence avoiding aberrant cytoplasmic SGs degradation via autophagy. The polypeptide is AN1-type zinc finger protein 1 (Homo sapiens (Human)).